The chain runs to 806 residues: Phenylalanine--tRNA ligase beta subunit (806 aa).

In terms of domain architecture, tRNA-binding spans 39 to 154 (SAGLKKIVVG…EAIAPGTDVY (116 aa)). A B5 domain is found at 410–485 (PQPKVIQFDS…RLYGYDNLPS (76 aa)). The Mg(2+) site is built by D463, D469, E472, and E473. The FDX-ACB domain maps to 713–806 (PKFPEVTRDI…LVATFQAKVR (94 aa)).

Belongs to the phenylalanyl-tRNA synthetase beta subunit family. Type 1 subfamily. Tetramer of two alpha and two beta subunits. Requires Mg(2+) as cofactor.

Its subcellular location is the cytoplasm. It carries out the reaction tRNA(Phe) + L-phenylalanine + ATP = L-phenylalanyl-tRNA(Phe) + AMP + diphosphate + H(+). The polypeptide is Phenylalanine--tRNA ligase beta subunit (Latilactobacillus sakei subsp. sakei (strain 23K) (Lactobacillus sakei subsp. sakei)).